We begin with the raw amino-acid sequence, 317 residues long: UV DNA damage endonuclease (317 aa).

This sequence belongs to the uve1/UvsE family.

Functionally, component in a DNA repair pathway. Removal of UV LIGHT damaged nucleotides. Recognizes pyrimidine dimers and cleave a phosphodiester bond immediately 5' to the lesion. The polypeptide is UV DNA damage endonuclease (Bacillus cereus (strain ATCC 10987 / NRS 248)).